Here is a 462-residue protein sequence, read N- to C-terminus: U2 small nuclear ribonucleoprotein auxiliary factor 35 kDa subunit-related protein 2 (462 aa).

Residues 1–13 (METAGATADATAG) are compositionally biased toward low complexity. Disordered regions lie at residues 1 to 22 (METAGATADATAGPQKLSRKKY), 44 to 66 (AELAQKEEEEDPLAEEKRLEEER), and 115 to 138 (WEEQQRKEREEEEQKRQEKREREE). Lysine 49 is covalently cross-linked (Glycyl lysine isopeptide (Lys-Gly) (interchain with G-Cter in SUMO2)). Residues 57–66 (AEEKRLEEER) are compositionally biased toward basic and acidic residues. Residues 170–198 (EKDRANCPFYSKTGACRFGDRCSRKHNFP) form a C3H1-type 1 zinc finger. An RRM domain is found at 202 to 308 (PTLLIKGMFT…RQLQCEFCPV (107 aa)). The C3H1-type 2 zinc-finger motif lies at 310-337 (RWKMAICGLFEVQQCPRGKHCNFLHVFR). Position 353 is a phosphoserine (serine 353). Residues 354-462 (PDWTSSSFGK…QPQPQPQSDP (109 aa)) form a disordered region. Residues 364–379 (NSERRERASHYDEYYG) are compositionally biased toward basic and acidic residues. Serine 389 is subject to Phosphoserine. Basic and acidic residues predominate over residues 392–403 (FYKRNGESDRKS). Residues 404–417 (SSRHRVKKSHRYGM) are compositionally biased toward basic residues.

As to quaternary structure, component of the U11/U12 snRNPs that are part of the U12-type spliceosome. Interacts (via RS domain) with SRSF1 and SRSF2. Interacts with U2AF2/U2AF65. Phosphorylated in the RS domain by SRPK1.

The protein resides in the nucleus. Its function is as follows. Pre-mRNA-binding protein required for splicing of both U2- and U12-type introns. Selectively interacts with the 3'-splice site of U2- and U12-type pre-mRNAs and promotes different steps in U2 and U12 intron splicing. Recruited to U12 pre-mRNAs in an ATP-dependent manner and is required for assembly of the prespliceosome, a precursor to other spliceosomal complexes. For U2-type introns, it is selectively and specifically required for the second step of splicing. In Mus musculus (Mouse), this protein is U2 small nuclear ribonucleoprotein auxiliary factor 35 kDa subunit-related protein 2 (Zrsr2).